The primary structure comprises 1061 residues: RecBCD enzyme subunit RecC (1061 aa).

Belongs to the RecC family. As to quaternary structure, heterotrimer of RecB, RecC and RecD. All subunits contribute to DNA-binding.

Its function is as follows. A helicase/nuclease that prepares dsDNA breaks (DSB) for recombinational DNA repair. Binds to DSBs and unwinds DNA via a highly rapid and processive ATP-dependent bidirectional helicase activity. Unwinds dsDNA until it encounters a Chi (crossover hotspot instigator) sequence from the 3' direction. Cuts ssDNA a few nucleotides 3' to the Chi site. The properties and activities of the enzyme are changed at Chi. The Chi-altered holoenzyme produces a long 3'-ssDNA overhang and facilitates RecA-binding to the ssDNA for homologous DNA recombination and repair. Holoenzyme degrades any linearized DNA that is unable to undergo homologous recombination. In the holoenzyme this subunit recognizes the wild-type Chi sequence, and when added to isolated RecB increases its ATP-dependent helicase processivity. This is RecBCD enzyme subunit RecC from Buchnera aphidicola subsp. Schizaphis graminum (strain Sg).